We begin with the raw amino-acid sequence, 200 residues long: Large ribosomal subunit protein uL4 (200 aa).

The disordered stretch occupies residues 38-65; it reads GRQGSKAQKTRSEVSGGGKKPWRQKGTG.

This sequence belongs to the universal ribosomal protein uL4 family. Part of the 50S ribosomal subunit.

Its function is as follows. One of the primary rRNA binding proteins, this protein initially binds near the 5'-end of the 23S rRNA. It is important during the early stages of 50S assembly. It makes multiple contacts with different domains of the 23S rRNA in the assembled 50S subunit and ribosome. In terms of biological role, forms part of the polypeptide exit tunnel. The protein is Large ribosomal subunit protein uL4 of Pseudomonas aeruginosa (strain LESB58).